The following is a 374-amino-acid chain: Putative cullin-like protein 2 (374 aa).

Belongs to the cullin family.

In Arabidopsis thaliana (Mouse-ear cress), this protein is Putative cullin-like protein 2.